Here is a 679-residue protein sequence, read N- to C-terminus: Stress-70 protein, mitochondrial (679 aa).

Residues 1–46 constitute a mitochondrion transit peptide; it reads MISASRAAVSRFVGTAASRGPTAARHQDGWNGLSHEAFRIVSRRDY. Residues 1–432 are interaction with NFS1; that stretch reads MISASRAAVS…IQGGVLAGDV (432 aa). The ADP site is built by Thr-63 and Asn-64. Residues 63-431 form a nucleotide-binding domain (NBD) region; sequence TNSCVAVMEG…AIQGGVLAGD (369 aa). Lys-76 is subject to N6-acetyllysine. Thr-87 bears the Phosphothreonine mark. An N6-acetyllysine; alternate mark is found at Lys-135 and Lys-138. N6-succinyllysine; alternate is present on residues Lys-135 and Lys-138. N6-acetyllysine is present on Lys-143. At Lys-206 the chain carries N6-acetyllysine; alternate. The residue at position 206 (Lys-206) is an N6-succinyllysine; alternate. Residue Lys-206 is modified to N6-malonyllysine; alternate. Residues Lys-234 and Lys-288 each carry the N6-acetyllysine modification. Lys-300 is modified (N6-acetyllysine; alternate). Residue Lys-300 is modified to N6-succinyllysine; alternate. Positions 313, 316, and 320 each coordinate ADP. Position 368 is an N6-succinyllysine (Lys-368). ADP is bound by residues Gly-388 and Arg-391. Lys-394 bears the N6-succinyllysine mark. Ser-408 is subject to Phosphoserine. The interval 432 to 441 is interdomain linker; it reads VTDVLLLDVT. The interaction with FXN and ISCU stretch occupies residues 432 to 679; sequence VTDVLLLDVT…QKDNQKEEKQ (248 aa). The interval 442-679 is substrate-binding domain (SBD); the sequence is PLSLGIETLG…QKDNQKEEKQ (238 aa). Arg-513 bears the Omega-N-methylarginine mark. N6-acetyllysine; alternate occurs at positions 567 and 600. Lys-567 and Lys-600 each carry N6-succinyllysine; alternate. An N6-succinyllysine modification is found at Lys-610. Lys-612 is modified (N6-acetyllysine). Residue Lys-646 is modified to N6-acetyllysine; alternate. Lys-646 is modified (N6-succinyllysine; alternate). A disordered region spans residues 656-679; sequence ASEREGSGSSGTGEQKDNQKEEKQ. The segment covering 669 to 679 has biased composition (basic and acidic residues); the sequence is EQKDNQKEEKQ.

Belongs to the heat shock protein 70 family. In terms of assembly, interacts strongly with the intermediate form of FXN and weakly with its mature form. Interacts with HSCB. Associates with the mitochondrial contact site and cristae organizing system (MICOS) complex, composed of at least MICOS10/MIC10, CHCHD3/MIC19, CHCHD6/MIC25, APOOL/MIC27, IMMT/MIC60, APOO/MIC23/MIC26 and QIL1/MIC13. This complex was also known under the names MINOS or MitOS complex. The MICOS complex associates with mitochondrial outer membrane proteins SAMM50, MTX1, MTX2 and DNAJC11, mitochondrial inner membrane protein TMEM11 and with HSPA9. Interacts with DNLZ, the interaction is required to prevent self-aggregation. Interacts with TESPA1. Interacts with PDPN. Interacts with NFU1, NFS1 and ISCU. Interacts with TP53; the interaction promotes TP53 degradation. Interacts (via SBD domain) with UBXN2A; the interaction with UBXN2A inhibits HSPA9/MOT-2 interaction with and degradation of TP53, thereby promotes TP53 translocation to the nucleus. Interacts with ITPR1 AND VDAC1; this interaction couples ITPR1 to VDAC1. Component of the TIM23 mitochondrial inner membrane pre-sequence translocase complex.

Its subcellular location is the mitochondrion. The protein localises to the nucleus. The protein resides in the nucleolus. It is found in the cytoplasm. It localises to the mitochondrion matrix. The catalysed reaction is ATP + H2O = ADP + phosphate + H(+). With respect to regulation, the chaperone activity is regulated by ATP-induced allosteric coupling of the nucleotide-binding (NBD) and substrate-binding (SBD) domains. ATP binding in the NBD leads to a conformational change in the NBD, which is transferred through the interdomain linker (IDL) to the substrate-binding domain (SBD). This elicits a reduced substrate affinity and a faster substrate exchange rate. Upon hydrolysis of ATP to ADP, the protein undergoes a conformational change that increases its affinity for substrate proteins. It cycles through repeated phases of ATP hydrolysis and nucleotide exchange, facilitating repeated cycles of substrate binding and release. Functions in collaboration with co-chaperones. Functions with the co-chaperone, DNLZ, to maintain solubility and regulate ATP hydrolysis. Nucleotide exchange factors, GRPEL1 and GRPEL2, accelerate nucleotide exchange. Its function is as follows. Mitochondrial chaperone that plays a key role in mitochondrial protein import, folding, and assembly. Plays an essential role in the protein quality control system, the correct folding of proteins, the re-folding of misfolded proteins, and the targeting of proteins for subsequent degradation. These processes are achieved through cycles of ATP binding, ATP hydrolysis, and ADP release, mediated by co-chaperones. In mitochondria, it associates with the TIM (translocase of the inner membrane) protein complex to assist in the import and folding of mitochondrial proteins. Plays an important role in mitochondrial iron-sulfur cluster (ISC) biogenesis, interacts with and stabilizes ISC cluster assembly proteins FXN, NFU1, NFS1 and ISCU. Regulates erythropoiesis via stabilization of ISC assembly. Regulates mitochondrial calcium-dependent apoptosis by coupling two calcium channels, ITPR1 and VDAC1, at the mitochondria-associated endoplasmic reticulum (ER) membrane to facilitate calcium transport from the ER lumen to the mitochondria intermembrane space, providing calcium for the downstream calcium channel MCU, which releases it into the mitochondrial matrix. Although primarily located in the mitochondria, it is also found in other cellular compartments. In the cytosol, it associates with proteins involved in signaling, apoptosis, or senescence. It may play a role in cell cycle regulation via its interaction with and promotion of degradation of TP53. May play a role in the control of cell proliferation and cellular aging. Protects against reactive oxygen species (ROS). Extracellular HSPA9 plays a cytoprotective role by preventing cell lysis following immune attack by the membrane attack complex by disrupting formation of the complex. This chain is Stress-70 protein, mitochondrial, found in Bos taurus (Bovine).